The primary structure comprises 304 residues: KIN17-like protein (304 aa).

Residues 26–50 (WYCSACQKQMRDENGFKCHTQSEGH) form a C2H2-type zinc finger. Disordered regions lie at residues 204 to 228 (IDLS…SAQN) and 261 to 291 (LNKS…DIIA).

It belongs to the KIN17 family.

Its subcellular location is the nucleus. It localises to the nucleolus. This Schizosaccharomyces pombe (strain 972 / ATCC 24843) (Fission yeast) protein is KIN17-like protein.